Reading from the N-terminus, the 517-residue chain is Argininosuccinate lyase, chloroplastic (517 aa).

Residues 1–45 constitute a chloroplast transit peptide; that stretch reads MGAIDLSFSQSLLFSSSRSNLSSSTHRSVSFLPPGSKSRCLPPLR. Residues S79, N166, and T211 each coordinate 2-(N(omega)-L-arginino)succinate. Catalysis depends on H212, which acts as the Proton acceptor. S333 (proton donor) is an active-site residue. Residues N341, Y373, Q378, and K381 each contribute to the 2-(N(omega)-L-arginino)succinate site.

This sequence belongs to the lyase 1 family. Argininosuccinate lyase subfamily.

It is found in the plastid. The protein resides in the chloroplast. The enzyme catalyses 2-(N(omega)-L-arginino)succinate = fumarate + L-arginine. It functions in the pathway amino-acid biosynthesis; L-arginine biosynthesis; L-arginine from L-ornithine and carbamoyl phosphate: step 3/3. The chain is Argininosuccinate lyase, chloroplastic from Arabidopsis thaliana (Mouse-ear cress).